The following is a 521-amino-acid chain: Runt-related transcription factor 2 (521 aa).

Disordered regions lie at residues 18-59 and 222-340; these read FWDP…QQQQ and DGPR…RRIS. 2 stretches are compositionally biased toward low complexity: residues 21 to 33 and 47 to 59; these read PSTSRRFSPPSSS and AAQQQQQQQQQQQ. Positions 101 to 229 constitute a Runt domain; sequence TMVEIIADHP…TVDGPREPRR (129 aa). Lys238 is covalently cross-linked (Glycyl lysine isopeptide (Lys-Gly) (interchain with G-Cter in SUMO2)). Positions 242–258 are required for interaction with FOXO1; it reads FSDRLSDLGRIPHPSMR. Arg267 carries the asymmetric dimethylarginine modification. The span at 267 to 326 shows a compositional bias: polar residues; it reads RPSLNSAPSPFNPQGQSQITDPRQAQSSPPWSYDQSYPSYLSQMTSPSIHSTTPLSSTRG. Residues 336-439 form an interaction with KAT6A region; the sequence is PRRISDDDTA…SQSQSGPFQT (104 aa). Ser340 is modified (phosphoserine). The interval 374 to 468 is interaction with KAT6B; the sequence is RQFPSISSLT…VPGGDRSPSR (95 aa). Ser451 bears the Phosphoserine; by CDK1 mark. The tract at residues 460 to 521 is disordered; that stretch reads PGGDRSPSRM…RMDESVWRPY (62 aa). 2 stretches are compositionally biased toward polar residues: residues 473-492 and 499-511; these read CTTTSNGSTLLNPNLPNQND and SHSSSPTVLNSSG. Over residues 512–521 the composition is skewed to basic and acidic residues; sequence RMDESVWRPY.

Heterodimer of an alpha and a beta subunit. The alpha subunit binds DNA as a monomer and through the Runt domain. DNA-binding is increased by heterodimerization. Interacts with XRCC6 (Ku70) and XRCC5 (Ku80). Interacts with HIVEP3. Interacts with IFI204. Interaction with SATB2; the interaction results in enhanced DNA binding and transactivation by these transcription factors. Binds to HIPK3. Interacts with FOXO1 (via a C-terminal region); the interaction inhibits RUNX2 transcriptional activity towards BGLAP. This interaction is prevented on insulin or IGF1 stimulation as FOXO1 is exported from the nucleus. Interacts with CCNB1, KAT6A and KAT6B. Interacts with FOXP3. Interacts with TMEM119. Interacts with OLFM2. Interacts with IPO7; the interaction inhibits RUNX2 nuclear translocation in osteoblasts. In terms of assembly, interacts with DDX5. Phosphorylated; probably by MAP kinases (MAPK). Phosphorylation by HIPK3 is required for the SPEN/MINT and FGF2 transactivation during osteoblastic differentiation. Phosphorylation at Ser-451 by CDK1 promotes endothelial cell proliferation required for tumor angiogenesis probably by facilitating cell cycle progression. Isoform 3 is phosphorylated on Ser-340. Specifically expressed in osteoblasts.

It localises to the nucleus. The protein localises to the cytoplasm. Functionally, transcription factor involved in osteoblastic differentiation and skeletal morphogenesis. Essential for the maturation of osteoblasts and both intramembranous and endochondral ossification. CBF binds to the core site, 5'-PYGPYGGT-3', of a number of enhancers and promoters, including murine leukemia virus, polyomavirus enhancer, T-cell receptor enhancers, osteocalcin, osteopontin, bone sialoprotein, alpha 1(I) collagen, LCK, IL-3 and GM-CSF promoters. In osteoblasts, supports transcription activation: synergizes with SPEN/MINT to enhance FGFR2-mediated activation of the osteocalcin FGF-responsive element (OCFRE). Inhibits KAT6B-dependent transcriptional activation. This Homo sapiens (Human) protein is Runt-related transcription factor 2 (RUNX2).